Here is a 614-residue protein sequence, read N- to C-terminus: MNNLIKSKLELLPTSPGCYIHKDKNGTIIYVGKAKNLRNRVRSYFRGSHDTKTEALVSEIVDFEFIVTESNIEALLLEINLIKENKPKYNIMLKDDKSYPFIKITNERYPRLIITRQVKKDGSLYFGPYPDVGAANEIKRLLDRIFPFRKCTNPPSKVCFYYHIGQCMAHTICKKDEAYFKSMAQEVSDFLKGQDDKIIDDLKSKMAVAAQSMEFERAAEYRDLIQAIGTLRTKQRVMAKDLQNRDVFGYYVDKGWMCVQVFFVRQGKLIERDVNLFPYFNDPDEDFLTYVGQFYQEKSHLVPNEVLIPQDIDEEAVKALVDSKILKPQRGEKKQLVNLAIKNARVSLEQKFNLLEKSVEKTQGAIENLGRLLQIPTPVRIESFDNSNIMGTSPVSAMVVFVNGKPSKKDYRKYKIKTVVGPDDYASMREVIRRRYGRVQREALTPPDLIVIDGGQGQVNIAKQVIQEELGLDIPIAGLQKNDKHQTHELLFGDPLEVVDLSRNSQEFFLLQRIQDEVHRFAITFHRQLRSKNSFSSQLDGIDGLGPKRKQNLMRHFKSLTKIKEASVDEIVEVGVPRVVAEAVQRKLNPQGEALSQVAEERVDYQTEGNHNEP.

The region spanning 14 to 91 (TSPGCYIHKD…IKENKPKYNI (78 aa)) is the GIY-YIG domain. The 36-residue stretch at 196-231 (DKIIDDLKSKMAVAAQSMEFERAAEYRDLIQAIGTL) folds into the UVR domain. Residues 595–614 (LSQVAEERVDYQTEGNHNEP) are disordered. Residues 599 to 614 (AEERVDYQTEGNHNEP) show a composition bias toward basic and acidic residues.

Belongs to the UvrC family. Interacts with UvrB in an incision complex.

Its subcellular location is the cytoplasm. In terms of biological role, the UvrABC repair system catalyzes the recognition and processing of DNA lesions. UvrC both incises the 5' and 3' sides of the lesion. The N-terminal half is responsible for the 3' incision and the C-terminal half is responsible for the 5' incision. This is UvrABC system protein C from Streptococcus pneumoniae serotype 2 (strain D39 / NCTC 7466).